The primary structure comprises 240 residues: Cysteine-rich venom protein ablomin (240 aa).

An N-terminal signal peptide occupies residues 1-19 (MIVFIVLPILAAVLQQSSG). One can recognise an SCP domain in the interval 38-166 (VDLHNSLRRS…EYSYFYVCQY (129 aa)). Intrachain disulfides connect Cys75-Cys153, Cys92-Cys167, Cys148-Cys164, Cys186-Cys193, Cys189-Cys198, Cys202-Cys235, Cys211-Cys229, and Cys220-Cys233. The 34-residue stretch at 202 to 235 (CTQEDVFTNCNSLVQQSNCQHNYIKTNCPASCFC) folds into the ShKT domain.

This sequence belongs to the CRISP family. Expressed by the venom gland.

Its subcellular location is the secreted. Functionally, blocks contraction of smooth muscle elicited by high potassium-induced depolarization, but does not block caffeine-stimulated contraction. Since high potassium-treatment activates voltage-gated channels and caffeine exposure activates ryanodine receptors, this toxin may target L-type voltage-gated calcium channels (Cav) (and not ryanodine receptors) on smooth muscle. This toxin also shows a little inhibition on cyclic nucleotide-gated CNGA1 channel. This Gloydius blomhoffii (Mamushi) protein is Cysteine-rich venom protein ablomin.